We begin with the raw amino-acid sequence, 89 residues long: Cell division protein FtsB (89 aa).

Topologically, residues 1–3 (MRP) are cytoplasmic. The helical transmembrane segment at 4-21 (IIAILIALFILLQYQLWF) threads the bilayer. The Periplasmic portion of the chain corresponds to 22 to 89 (AAGGIVSVHH…KNEVFYQIVK (68 aa)). Residues 29–62 (VHHLNENINHQIMENQKLKDRNTALLADIDDLKH) adopt a coiled-coil conformation.

Belongs to the FtsB family. In terms of assembly, part of a complex composed of FtsB, FtsL and FtsQ.

It localises to the cell inner membrane. Functionally, essential cell division protein. May link together the upstream cell division proteins, which are predominantly cytoplasmic, with the downstream cell division proteins, which are predominantly periplasmic. In Coxiella burnetii (strain RSA 493 / Nine Mile phase I), this protein is Cell division protein FtsB.